A 611-amino-acid chain; its full sequence is Oxidoreductase cicC (611 aa).

An N-terminal signal peptide occupies residues Met1–Ala20. Residues Asn45–Ala46 and Glu65–Ala66 each bind FAD. N-linked (GlcNAc...) asparagine glycosylation is found at Asn76 and Asn113. FAD is bound by residues Val123 and Asn131 to Thr134. N-linked (GlcNAc...) asparagine glycans are attached at residues Asn282, Asn410, and Asn475. His547 (proton acceptor) is an active-site residue. The Proton donor role is filled by His547. Position 581 (Ala581) interacts with FAD. Residue His591 is the Proton acceptor of the active site. Pro592–Ile593 is a binding site for FAD.

Belongs to the GMC oxidoreductase family. FAD is required as a cofactor.

It functions in the pathway phytotoxin biosynthesis. Oxidoreductase; part of the gene cluster that mediates the biosynthesis of cichorine, a phytotoxin active against knapweed, corn, and soybeans. The first step in the pathway is performed by the non-reducing polyketide synthase pkbA that condenses one acetyl-CoA starter unit with 3 malonyl-CoA units. PkbA also catalyzes one methylation step to produce 3-methylorsellinate. The nonribosomal peptide synthase-like protein cicB, the cytochrome P450 monooxygenase cicH and the O-methyltransferase cicE are involved in the conversion of 3-methylorsellinate into nidulol. CicB converts 3-methylorsellinate to a yet unidentified intermediate, cicH may play a ring-closing role for cichorine and cicE is plausibly responsible for the methylation of one of the phenol groups. The oxidoreductase cicC acts downstream with still unidentified enzymes to further convert nidulol into cichorine. The protein is Oxidoreductase cicC of Emericella nidulans (strain FGSC A4 / ATCC 38163 / CBS 112.46 / NRRL 194 / M139) (Aspergillus nidulans).